The chain runs to 2215 residues: Sortilin-related receptor (2215 aa).

The signal sequence occupies residues 1-28 (MATRSSRRESRLPFLFALVALLPRGALG). Positions 29–81 (GGWTQRLHGGPAPLPQDRGFFVVQGDPRDLRLGTHGDAPGASPAARKPLRTRR) are cleaved as a propeptide — removed in mature form. The tract at residues 59 to 84 (RLGTHGDAPGASPAARKPLRTRRSAA) is disordered. The Lumenal segment spans residues 82–2138 (SAALQPQPIQ…IQAARSTDVA (2057 aa)). N-linked (GlcNAc...) asparagine glycosylation occurs at asparagine 99. The residue at position 114 (serine 114) is a Phosphoserine. Residues 136–147 (YVSYDYGKSFSK) form a BNR 1 repeat. Asparagine 158 is a glycosylation site (N-linked (GlcNAc...) asparagine). The stretch at 232-243 (WKSDDFGQTWIM) is one BNR 2 repeat. Residues asparagine 367, asparagine 368, and asparagine 430 are each glycosylated (N-linked (GlcNAc...) asparagine). BNR repeat units lie at residues 441 to 452 (VITFDKGGTWEF), 521 to 532 (YISSSAGARWRE), and 562 to 573 (KYSTNEGETWKT). Residues asparagine 616, asparagine 674, asparagine 818, and asparagine 871 are each glycosylated (N-linked (GlcNAc...) asparagine). LDL-receptor class B repeat units follow at residues 800–843 (NCLY…EPLS), 844–887 (QLLY…VPQE), 888–932 (GVMF…DSQW), 933–972 (IYWTDAYLDCIERITFSGQQRSVILDSLPHPYAIAVFKNE), and 973–1013 (IYWD…FYKG). The EGF-like domain maps to 1026–1072 (CSLLCLPKANNSKSCRCPEGVASSVLPSGDLMCDCPQGYQRKNNTCV). 2 N-linked (GlcNAc...) asparagine glycosylation sites follow: asparagine 1035 and asparagine 1068. LDL-receptor class A domains are found at residues 1076-1114 (NTCLRNQYRCSNGNCINSIWWCDFDNDCGDMSDERNCPT), 1115-1155 (TVCD…HCEM), 1156-1194 (HQCRSDEFNCSSGMCIRSSWVCDGDNDCRDWSDEANCTA), 1198-1236 (TCEASNFQCHNGHCIPQRWACDGDADCQDGSDEDPVSCE), 1238-1272 (KCNGFHCPNGTCIPSSKHCDGLRDCPDGSDEQHCE), 1273-1317 (PFCT…GCSQ), 1323-1361 (KECDEFGFQCQNGVCISLIWKCDGMDDCGDYSDEANCEN), 1366-1405 (PNCSRYFQFHCENGHCIPNRWKCDRENDCGDWSDEKDCGD), and 1417-1455 (STCLPNYFHCSSGACVMGTWVCDGYRDCADGSDEEACPS). 21 disulfide bridges follow: cysteine 1078–cysteine 1090, cysteine 1085–cysteine 1103, cysteine 1097–cysteine 1112, cysteine 1117–cysteine 1131, cysteine 1125–cysteine 1144, cysteine 1138–cysteine 1153, cysteine 1158–cysteine 1170, cysteine 1165–cysteine 1183, cysteine 1177–cysteine 1192, cysteine 1199–cysteine 1211, cysteine 1206–cysteine 1224, cysteine 1218–cysteine 1235, cysteine 1239–cysteine 1249, cysteine 1244–cysteine 1262, cysteine 1256–cysteine 1271, cysteine 1275–cysteine 1289, cysteine 1283–cysteine 1302, cysteine 1296–cysteine 1315, cysteine 1325–cysteine 1337, cysteine 1332–cysteine 1350, and cysteine 1344–cysteine 1359. N-linked (GlcNAc...) asparagine glycosylation occurs at asparagine 1164. The N-linked (GlcNAc...) asparagine glycan is linked to asparagine 1191. Asparagine 1246 carries N-linked (GlcNAc...) asparagine glycosylation. N-linked (GlcNAc...) asparagine glycosylation is present at asparagine 1367. 6 disulfide bridges follow: cysteine 1368–cysteine 1381, cysteine 1376–cysteine 1394, cysteine 1388–cysteine 1403, cysteine 1419–cysteine 1431, cysteine 1426–cysteine 1444, and cysteine 1438–cysteine 1453. Asparagine 1458 is a glycosylation site (N-linked (GlcNAc...) asparagine). LDL-receptor class A domains lie at 1469 to 1508 (GQCDRFEFECHQPKKCIPNWKRCDGHQDCQDGQDEANCPT) and 1512 to 1551 (LTCTSREFKCEDGEACIVLSERCDGFLDCSDESDEKACSD). 6 cysteine pairs are disulfide-bonded: cysteine 1471–cysteine 1484, cysteine 1478–cysteine 1497, cysteine 1491–cysteine 1506, cysteine 1514–cysteine 1527, cysteine 1521–cysteine 1540, and cysteine 1534–cysteine 1549. Fibronectin type-III domains lie at 1557-1649 (KVQN…TPEG), 1653-1745 (APRN…TIKG), 1747-1846 (VIQA…SPPA), 1844-1928 (PPAP…VVKM), 1935-2030 (PPRH…APDA), and 2031-2119 (LKII…LYDE). N-linked (GlcNAc...) asparagine glycans are attached at residues asparagine 1608, asparagine 1706, asparagine 1733, asparagine 1810, asparagine 1855, asparagine 1895, asparagine 1987, asparagine 2011, asparagine 2055, asparagine 2070, asparagine 2077, and asparagine 2093. A helical membrane pass occupies residues 2139–2159 (AVVVPILFLILLSLGVGFAIL). Over 2160–2215 (YTKHRRLQSSFSAFANSHYSSRLGSAIFSSGDDLGEDDEDAPMITGFSDDVPMVIA) the chain is Cytoplasmic. A Potential nuclear localization signal for the C-terminal fragment generated by PSEN1 motif is present at residues 2162 to 2165 (KHRR). Residues 2173–2178 (FANSHY) carry the Endocytosis signal motif. Positions 2191 to 2215 (DDLGEDDEDAPMITGFSDDVPMVIA) are required for efficient Golgi apparatus - endosome sorting. The interval 2202–2215 (MITGFSDDVPMVIA) is required for interaction with GGA1 and GGA2. Serine 2207 carries the post-translational modification Phosphoserine; by ROCK2. A DXXLL motif involved in the interaction with GGA1 motif is present at residues 2209 to 2213 (DVPMV).

The protein belongs to the VPS10-related sortilin family. SORL1 subfamily. As to quaternary structure, after maturation cleavage, interacts (via N-terminus) with its own propeptide; this interaction prevents interaction with other ligands, including CRLF1, GDNF, GFRA1, IL6 and IL6R. Interacts (via N-terminal ectodomain) with APP, forming a 1:1 stoichiometric complex, including with isoforms APP695, APP751 and APP770; this interaction retains APP in the trans-Golgi network and reduces processing into soluble APP-alpha and amyloid-beta peptides. Also interacts with APP C-terminal fragment C99 and with Abeta40. Interacts with beta-secretase BACE1/BACE; this interaction may affect BACE1-binding to APP and hence reduce BACE1-dependent APP cleavage. Interacts with LRPAP1/RAP. Interacts (via C-terminal cytosolic domain) with GGA1 and GGA2 (via N-terminal VHS domain). Interacts with PACS1. May interact (via the N-terminal ectodomain) with the morphogenetic neuropeptide, also called head activator or HA; this interaction is impaired in the presence of propeptide. Interacts with neurotensin/NTS. Interacts (via the N-terminal ectodomain) with PDGFB homodimer. Interacts (via N-terminal ectodomain) with the uPA receptor PLAUR. Interacts with uPA/PLAU and PAI1/SERPINE1, either individually or in complex with each other, leading to endocytosis. Also interacts with PAI1/SERPINE1 in complex with tPA/PLAT. Interacts (via C-terminus) with AP-1 and AP-2 complexes. Interacts with BMPR1A and BMPR1B. Interacts with lipoprotein lipase LPL; this interaction is optimal in slightly acidic conditions. Interacts (via N-terminal ectodomain) with GDNF (via propeptide) and GDNF receptor alpha-1/GFRA1, either individually or in complex with each other. The interaction with GDNF occurs mostly intracellularly. Also interacts with other GDNF receptor alpha family members, including GFRA2, GFRA3 and GFRA4. Interacts with the insulin receptor INSR; this interaction strongly increases the surface exposure of INSR. Interacts (via cytosolic C-terminus) with STK39/SPAK. Interacts (via N-terminal ectodomain) with the heterodimeric complex CRLF1-CLC; within this complex, the interaction is mediated predominantly by the CRLF1 moiety. Interacts with CNTFR, as well as with the tripartite signaling complex formed by CRLF1, CLC and CNTFR. Interacts (via N-terminal ectodomain) with IL6; this interaction leads to IL6 internalization and lysosomal degradation. Binding of SOLRL1 secreted N-terminal ectodomain to IL6 may increase IL6 trans signaling. Interacts with secreted IL6R; this interaction leads to IL6R internalization. Also interacts with transmembrane IL6R; this interaction does not affect subcellular location. Interacts with APOE. Interacts with apolipoprotein E-rich beta-VLDL. Interacts with APOA5; this interaction leads to APOA5 internalization and is abolished by heparin. Interaction with APOA5 results in enhanced binding to chylomicrons. Interacts with ROCK2. Interacts (via cytosolic C-terminus) with PPP3CB/calcineurin A beta. Interacts with NTRK2/TRKB; this interaction facilitates NTRK2 trafficking between synaptic plasma membranes, postsynaptic densities and cell soma, hence positively regulates BDNF signaling. Interacts (via cytosolic C-terminus) with HSPA12A in an ADP-dependent manner; this interaction affects SORL1 internalization and subcellular localization. Interacts (via N-terminal ectodomain) with ERBB2/HER2. Within the Golgi apparatus, the propeptide may be cleaved off by FURIN or a furin-like protease. After cleavage, the propeptide interacts with the mature protein N-terminus, preventing the association with other ligands. At the cell surface, partially subjected to proteolytic shedding that releases the ectodomain in the extracellular milieu. The shedding may be catalyzed by ADAM17/TACE. Following shedding, PSEN1/presenilin-1 cleaves the remaining transmembrane fragment and catalyzes the release of a C-terminal fragment in the cytosol and of a soluble N-terminal beta fragment in the extracellular milieu. The C-terminal cytosolic fragment localizes to the nucleus. In terms of processing, phosphorylation at Ser-2207 facilitates the interaction with GGA1. In terms of tissue distribution, highly expressed in the central nervous system, including in the brain and spinal cord, in neurons, as well as in glial cells (at protein level). In the brain, mainly expressed in the cerebellum, hippocampus, dentate gyrus, hypothalamus, and in the cerebral cortex (at protein level). Also detected in kidney, heart, lung and spleen. In the kidney, expressed in epithelial cells in the thick ascending limb of Henle's loop, the distal convoluted tubule, the connecting tubule and the cortical collecting duct (at protein level). Expressed in skeletal muscle (at protein level). Expressed in adipose tissue, including in brown adipose tissue and subcutaneous white adipose tissue. Expressed in intimal smooth muscle cells (at protein level).

The protein resides in the golgi apparatus membrane. It localises to the golgi apparatus. Its subcellular location is the trans-Golgi network membrane. The protein localises to the endosome membrane. It is found in the early endosome membrane. The protein resides in the recycling endosome membrane. It localises to the endoplasmic reticulum membrane. Its subcellular location is the endosome. The protein localises to the multivesicular body membrane. It is found in the cell membrane. The protein resides in the cytoplasmic vesicle. It localises to the secretory vesicle membrane. Its subcellular location is the secreted. Functionally, sorting receptor that directs several proteins to their correct location within the cell. Along with AP-1 complex, involved Golgi apparatus - endosome sorting. Sorting receptor for APP, regulating its intracellular trafficking and processing into amyloidogenic-beta peptides. Retains APP in the trans-Golgi network, hence preventing its transit through late endosomes where amyloid beta peptides Abeta40 and Abeta42 are generated. May also sort newly produced amyloid-beta peptides to lysosomes for catabolism. Does not affect APP trafficking from the endoplasmic reticulum to Golgi compartments. Sorting receptor for the BDNF receptor NTRK2/TRKB that facilitates NTRK2 trafficking between synaptic plasma membranes, postsynaptic densities and cell soma, hence positively regulates BDNF signaling by controlling the intracellular location of its receptor. Sorting receptor for GDNF that promotes GDNF regulated, but not constitutive secretion. Sorting receptor for the GDNF-GFRA1 complex, directing it from the cell surface to endosomes. GDNF is then targeted to lysosomes and degraded, while its receptor GFRA1 recycles back to the cell membrane, resulting in a GDNF clearance pathway. The SORL1-GFRA1 complex further targets RET for endocytosis, but not for degradation, affecting GDNF-induced neurotrophic activities. Sorting receptor for ERBB2/HER2. Regulates ERBB2 subcellular distribution by promoting its recycling after internalization from endosomes back to the plasma membrane, hence stimulating phosphoinositide 3-kinase (PI3K)-dependent ERBB2 signaling. Sorting receptor for lipoprotein lipase LPL. Promotes LPL localization to endosomes and later to the lysosomes, leading to degradation of newly synthesized LPL. Potential sorting receptor for APOA5, inducing APOA5 internalization to early endosomes, then to late endosomes, wherefrom a portion is sent to lysosomes and degradation, another portion is sorted to the trans-Golgi network. Sorting receptor for the insulin receptor INSR. Promotes recycling of internalized INSR via the Golgi apparatus back to the cell surface, thereby preventing lysosomal INSR catabolism, increasing INSR cell surface expression and strengthening insulin signal reception in adipose tissue. Does not affect INSR internalization. Plays a role in renal ion homeostasis, controlling the phospho-regulation of SLC12A1/NKCC2 by STK39/SPAK kinase and PPP3CB/calcineurin A beta phosphatase, possibly through intracellular sorting of STK39 and PPP3CB. Stimulates, via the N-terminal ectodomain, the proliferation and migration of smooth muscle cells, possibly by increasing cell surface expression of the urokinase receptor uPAR/PLAUR. This may promote extracellular matrix proteolysis and hence facilitate cell migration. By acting on the migration of intimal smooth muscle cells, may accelerate intimal thickening following vascular injury. Promotes adhesion of monocytes. Stimulates proliferation and migration of monocytes/macrophages. Through its action on intimal smooth muscle cells and macrophages, may accelerate intimal thickening and macrophage foam cell formation in the process of atherosclerosis. Regulates hypoxia-enhanced adhesion of hematopoietic stem and progenitor cells to the bone marrow stromal cells via a PLAUR-mediated pathway. This function is mediated by the N-terminal ectodomain. Metabolic regulator, which functions to maintain the adequate balance between lipid storage and oxidation in response to changing environmental conditions, such as temperature and diet. The N-terminal ectodomain negatively regulates adipose tissue energy expenditure, acting through the inhibition the BMP/Smad pathway. May regulate signaling by the heterodimeric neurotrophic cytokine CLCF1-CRLF1 bound to the CNTFR receptor by promoting the endocytosis of the tripartite complex CLCF1-CRLF1-CNTFR and lysosomal degradation. May regulate IL6 signaling, decreasing cis signaling, possibly by interfering with IL6-binding to membrane-bound IL6R, while up-regulating trans signaling via soluble IL6R. The sequence is that of Sortilin-related receptor (Sorl1) from Mus musculus (Mouse).